Consider the following 402-residue polypeptide: Putative cytochrome P450 133B1 (402 aa).

C348 is a binding site for heme.

The protein belongs to the cytochrome P450 family. Heme is required as a cofactor.

The sequence is that of Putative cytochrome P450 133B1 (cyp133B1) from Xylella fastidiosa (strain 9a5c).